Here is a 460-residue protein sequence, read N- to C-terminus: Mitochondrial distribution and morphology protein 34 (460 aa).

The region spanning 1-196 (MSFKFDWESL…LPGIIHRLSQ (196 aa)) is the SMP-LTD domain. Residues 304-321 (HNHQAPKRRTIKYKRKSK) show a composition bias toward basic residues. 2 disordered regions span residues 304 to 356 (HNHQ…PSRE) and 368 to 460 (EPSS…AYSG). 2 stretches are compositionally biased toward low complexity: residues 330 to 355 (STEV…TPSR) and 393 to 405 (SPPS…DTSL).

It belongs to the MDM34 family. As to quaternary structure, component of the ER-mitochondria encounter structure (ERMES) or MDM complex, composed of MMM1, MDM10, MDM12 and MDM34.

The protein resides in the mitochondrion outer membrane. In terms of biological role, component of the ERMES/MDM complex, which serves as a molecular tether to connect the endoplasmic reticulum (ER) and mitochondria. Components of this complex are involved in the control of mitochondrial shape and protein biogenesis, and function in nonvesicular lipid trafficking between the ER and mitochondria. MDM34 is required for the interaction of the ER-resident membrane protein MMM1 and the outer mitochondrial membrane-resident beta-barrel protein MDM10. The sequence is that of Mitochondrial distribution and morphology protein 34 from Yarrowia lipolytica (strain CLIB 122 / E 150) (Yeast).